Consider the following 643-residue polypeptide: MPLNFKPGDLVFAKMKGYPHWPARIDDVKDGAVKPPPNKYPIFFYGTHETAFLAPKDLFPYEKCKDKYGKPNKRKGFNEGLWEIQNNPQASYSLPPASVSSSDSDVPEEKSTARSDGEEEQETGQAILPTAGVSSSDEEGSDKGGVKRKGRTTTPPSAKRTKHSSSEQEPDSASSSEEENSDSDQDFTPEKSTPRIQRRTTNLGKKNKIFAESDSKSDESEDEKKEEEQKKSPSSSSASSPSLSSSDSEAPVKKTPRGRRPAEKPAPKPRGRGRKAEPIPSSDSSDSDSSVDRISEWKKRDEERRRELEERRKKEQEEQLRRLREEEREEEERKKREKAEKGDKSDSDSDSSKSEVIAPPKPKKSSSSSDSEEDKKPVKEVKPVASEIKKGKKEKVRAISDDSDSDKKVKKTIKKTRPSESARKTNQKEKRGERPRGRPSKVEKEKKKPEVITARKVVKKEPTVEEKLQKLHSEIKFALKVDNPDIQKCLDALEELGGLQVTSQILQKNTDVVATLKKIRRYKANQSVMDKAAEVYSRIKARILGPKLESQQKTVQKVNTAEKDPEEEKQTGKVEEDMDASVNGDFLSQRIETAGDKEQDGEGQNLDNKTEMETKQNNHAEHNSNPTEETIECRLISSENQTS.

Residues 7–64 form the PWWP domain; the sequence is PGDLVFAKMKGYPHWPARIDDVKDGAVKPPPNKYPIFFYGTHETAFLAPKDLFPYEKC. Disordered regions lie at residues 88–450 and 548–643; these read PQAS…KKPE and LESQ…NQTS. Residues 90–104 show a composition bias toward low complexity; it reads ASYSLPPASVSSSDS. Residues 107–116 are compositionally biased toward basic and acidic residues; that stretch reads PEEKSTARSD. A compositionally biased stretch (acidic residues) spans 176–187; the sequence is SEEENSDSDQDF. Positions 194 to 204 are enriched in polar residues; the sequence is PRIQRRTTNLG. A compositionally biased stretch (basic and acidic residues) spans 209 to 231; sequence IFAESDSKSDESEDEKKEEEQKK. The segment covering 232-249 has biased composition (low complexity); sequence SPSSSSASSPSLSSSDSE. Basic and acidic residues-rich tracts occupy residues 290-353, 373-382, and 417-450; these read SVDR…DSSK, EDKKPVKEVK, and RPSESARKTNQKEKRGERPRGRPSKVEKEKKKPE. The stretch at 295–345 forms a coiled coil; it reads SEWKKRDEERRRELEERRKKEQEEQLRRLREEEREEEERKKREKAEKGDKS. Residues 549-559 show a composition bias toward polar residues; it reads ESQQKTVQKVN. 2 stretches are compositionally biased toward basic and acidic residues: residues 560–575 and 608–622; these read TAEKDPEEEKQTGKVE and NKTEMETKQNNHAEH.

This sequence belongs to the HDGF family.

The protein resides in the nucleus. The protein localises to the cytoplasm. In terms of biological role, may act as a regulator of myogenesis. Promotes the repair of DNA double-strand breaks (DSBs) through the homologous recombination pathway by facilitating the recruitment of the DNA endonuclease RBBP8 to the DSBs. This is Hepatoma-derived growth factor-related protein 2 (hdgfl2) from Xenopus tropicalis (Western clawed frog).